We begin with the raw amino-acid sequence, 859 residues long: DNA mismatch repair protein MutS (859 aa).

Residue 612-619 participates in ATP binding; it reads GPNMGGKS. A disordered region spans residues 797–822; it reads SKPLAPSATPPSSYAAPSPAAAPAQA.

This sequence belongs to the DNA mismatch repair MutS family.

This protein is involved in the repair of mismatches in DNA. It is possible that it carries out the mismatch recognition step. This protein has a weak ATPase activity. The protein is DNA mismatch repair protein MutS of Alcanivorax borkumensis (strain ATCC 700651 / DSM 11573 / NCIMB 13689 / SK2).